A 469-amino-acid polypeptide reads, in one-letter code: Adenosylhomocysteinase (469 aa).

Substrate contacts are provided by Thr-63, Asp-139, and Glu-164. 165 to 167 provides a ligand contact to NAD(+); it reads TTT. Positions 194 and 198 each coordinate substrate. NAD(+) is bound by residues Asn-199, 228–233, Glu-251, Asn-300, 321–323, and Asn-375; these read GYGDVG and IGH.

Belongs to the adenosylhomocysteinase family. Requires NAD(+) as cofactor.

The protein resides in the cytoplasm. The catalysed reaction is S-adenosyl-L-homocysteine + H2O = L-homocysteine + adenosine. It participates in amino-acid biosynthesis; L-homocysteine biosynthesis; L-homocysteine from S-adenosyl-L-homocysteine: step 1/1. Its function is as follows. May play a key role in the regulation of the intracellular concentration of adenosylhomocysteine. The protein is Adenosylhomocysteinase of Pseudomonas putida (strain GB-1).